Reading from the N-terminus, the 166-residue chain is Putative 4-hydroxy-4-methyl-2-oxoglutarate aldolase 1 (166 aa).

At Ala-2 the chain carries N-acetylalanine. Residues 81–84 and Arg-103 each bind substrate; that span reads GGNP. A divalent metal cation is bound at residue Asp-104.

This sequence belongs to the class II aldolase/RraA-like family. In terms of assembly, homotrimer. It depends on a divalent metal cation as a cofactor.

The enzyme catalyses 4-hydroxy-4-methyl-2-oxoglutarate = 2 pyruvate. The catalysed reaction is oxaloacetate + H(+) = pyruvate + CO2. Its function is as follows. Catalyzes the aldol cleavage of 4-hydroxy-4-methyl-2-oxoglutarate (HMG) into 2 molecules of pyruvate. Also contains a secondary oxaloacetate (OAA) decarboxylase activity due to the common pyruvate enolate transition state formed following C-C bond cleavage in the retro-aldol and decarboxylation reactions. This is Putative 4-hydroxy-4-methyl-2-oxoglutarate aldolase 1 from Arabidopsis thaliana (Mouse-ear cress).